We begin with the raw amino-acid sequence, 201 residues long: NADH-quinone oxidoreductase subunit C (201 aa).

Belongs to the complex I 30 kDa subunit family. As to quaternary structure, NDH-1 is composed of 14 different subunits. Subunits NuoB, C, D, E, F, and G constitute the peripheral sector of the complex.

The protein resides in the cell inner membrane. It catalyses the reaction a quinone + NADH + 5 H(+)(in) = a quinol + NAD(+) + 4 H(+)(out). Its function is as follows. NDH-1 shuttles electrons from NADH, via FMN and iron-sulfur (Fe-S) centers, to quinones in the respiratory chain. The immediate electron acceptor for the enzyme in this species is believed to be ubiquinone. Couples the redox reaction to proton translocation (for every two electrons transferred, four hydrogen ions are translocated across the cytoplasmic membrane), and thus conserves the redox energy in a proton gradient. This chain is NADH-quinone oxidoreductase subunit C, found in Mesorhizobium japonicum (strain LMG 29417 / CECT 9101 / MAFF 303099) (Mesorhizobium loti (strain MAFF 303099)).